The sequence spans 185 residues: Large ribosomal subunit protein uL5 (185 aa).

It belongs to the universal ribosomal protein uL5 family. In terms of assembly, part of the 50S ribosomal subunit; part of the 5S rRNA/L5/L18/L25 subcomplex. Contacts the 5S rRNA and the P site tRNA. Forms a bridge to the 30S subunit in the 70S ribosome.

Its function is as follows. This is one of the proteins that bind and probably mediate the attachment of the 5S RNA into the large ribosomal subunit, where it forms part of the central protuberance. In the 70S ribosome it contacts protein S13 of the 30S subunit (bridge B1b), connecting the 2 subunits; this bridge is implicated in subunit movement. Contacts the P site tRNA; the 5S rRNA and some of its associated proteins might help stabilize positioning of ribosome-bound tRNAs. This chain is Large ribosomal subunit protein uL5, found in Rhodopseudomonas palustris (strain BisA53).